We begin with the raw amino-acid sequence, 241 residues long: 4-hydroxy-tetrahydrodipicolinate reductase (241 aa).

NAD(+)-binding positions include 7-12, 74-76, and 98-101; these read GVNGHM, GTT, and STNM. The Proton donor/acceptor role is filled by H131. H132 contributes to the (S)-2,3,4,5-tetrahydrodipicolinate binding site. K135 functions as the Proton donor in the catalytic mechanism. 141–142 provides a ligand contact to (S)-2,3,4,5-tetrahydrodipicolinate; it reads GS.

It belongs to the DapB family.

It localises to the cytoplasm. The enzyme catalyses (S)-2,3,4,5-tetrahydrodipicolinate + NAD(+) + H2O = (2S,4S)-4-hydroxy-2,3,4,5-tetrahydrodipicolinate + NADH + H(+). It carries out the reaction (S)-2,3,4,5-tetrahydrodipicolinate + NADP(+) + H2O = (2S,4S)-4-hydroxy-2,3,4,5-tetrahydrodipicolinate + NADPH + H(+). Its pathway is amino-acid biosynthesis; L-lysine biosynthesis via DAP pathway; (S)-tetrahydrodipicolinate from L-aspartate: step 4/4. In terms of biological role, catalyzes the conversion of 4-hydroxy-tetrahydrodipicolinate (HTPA) to tetrahydrodipicolinate. The sequence is that of 4-hydroxy-tetrahydrodipicolinate reductase from Alkaliphilus oremlandii (strain OhILAs) (Clostridium oremlandii (strain OhILAs)).